The sequence spans 946 residues: Leucine--tRNA ligase (946 aa).

Positions 40–51 (PYPSGAGLHVGH) match the 'HIGH' region motif. The 'KMSKS' region signature appears at 719–723 (KMSKS). Lysine 722 contacts ATP.

It belongs to the class-I aminoacyl-tRNA synthetase family.

The protein localises to the cytoplasm. The enzyme catalyses tRNA(Leu) + L-leucine + ATP = L-leucyl-tRNA(Leu) + AMP + diphosphate. In Parabacteroides distasonis (strain ATCC 8503 / DSM 20701 / CIP 104284 / JCM 5825 / NCTC 11152), this protein is Leucine--tRNA ligase.